The sequence spans 455 residues: Bifunctional protein GlmU (455 aa).

Residues 1–230 (MTKRNAIILA…FDESMGVNDR (230 aa)) form a pyrophosphorylase region. UDP-N-acetyl-alpha-D-glucosamine contacts are provided by residues 9 to 12 (LAAG), K23, Q73, 78 to 79 (GT), 101 to 103 (SGD), G140, E155, N170, and N228. Residue D103 participates in Mg(2+) binding. Residue N228 participates in Mg(2+) binding. Residues 231–251 (VALARANKVMRNRINTHWMRE) form a linker region. Positions 252-455 (GVSMIDPETT…KENYAKKLPW (204 aa)) are N-acetyltransferase. The UDP-N-acetyl-alpha-D-glucosamine site is built by R333 and K351. The Proton acceptor role is filled by H363. Residues Y366 and N377 each coordinate UDP-N-acetyl-alpha-D-glucosamine. Residues 386-387 (NY), S405, A423, and R440 contribute to the acetyl-CoA site.

In the N-terminal section; belongs to the N-acetylglucosamine-1-phosphate uridyltransferase family. It in the C-terminal section; belongs to the transferase hexapeptide repeat family. In terms of assembly, homotrimer. It depends on Mg(2+) as a cofactor.

The protein localises to the cytoplasm. It carries out the reaction alpha-D-glucosamine 1-phosphate + acetyl-CoA = N-acetyl-alpha-D-glucosamine 1-phosphate + CoA + H(+). The catalysed reaction is N-acetyl-alpha-D-glucosamine 1-phosphate + UTP + H(+) = UDP-N-acetyl-alpha-D-glucosamine + diphosphate. It participates in nucleotide-sugar biosynthesis; UDP-N-acetyl-alpha-D-glucosamine biosynthesis; N-acetyl-alpha-D-glucosamine 1-phosphate from alpha-D-glucosamine 6-phosphate (route II): step 2/2. The protein operates within nucleotide-sugar biosynthesis; UDP-N-acetyl-alpha-D-glucosamine biosynthesis; UDP-N-acetyl-alpha-D-glucosamine from N-acetyl-alpha-D-glucosamine 1-phosphate: step 1/1. Its pathway is bacterial outer membrane biogenesis; LPS lipid A biosynthesis. In terms of biological role, catalyzes the last two sequential reactions in the de novo biosynthetic pathway for UDP-N-acetylglucosamine (UDP-GlcNAc). The C-terminal domain catalyzes the transfer of acetyl group from acetyl coenzyme A to glucosamine-1-phosphate (GlcN-1-P) to produce N-acetylglucosamine-1-phosphate (GlcNAc-1-P), which is converted into UDP-GlcNAc by the transfer of uridine 5-monophosphate (from uridine 5-triphosphate), a reaction catalyzed by the N-terminal domain. The protein is Bifunctional protein GlmU of Limosilactobacillus reuteri (strain DSM 20016) (Lactobacillus reuteri).